The sequence spans 354 residues: Photosystem II D2 protein (354 aa).

Threonine 2 carries the N-acetylthreonine modification. Threonine 2 is modified (phosphothreonine). Residues 42 to 62 (CAYFALGGFFTGNTFVTSWYT) form a helical membrane-spanning segment. Histidine 119 contributes to the chlorophyll a binding site. Residues 126–142 (GFMLRQFEIARAVKIRP) traverse the membrane as a helical segment. Positions 131 and 144 each coordinate pheophytin a. The helical transmembrane segment at 154 to 167 (VFVSVFLIYPLGQQ) threads the bilayer. Position 199 (histidine 199) interacts with chlorophyll a. Residues 209–229 (AALLCAIHGATVENTLFEDGD) traverse the membrane as a helical segment. A plastoquinone-binding residues include histidine 216 and phenylalanine 263. Fe cation is bound at residue histidine 216. Fe cation is bound at residue histidine 270. Residues 280–296 (GLWMSAIGVVGLALNLR) traverse the membrane as a helical segment.

This sequence belongs to the reaction center PufL/M/PsbA/D family. In terms of assembly, PSII is composed of 1 copy each of membrane proteins PsbA, PsbB, PsbC, PsbD, PsbE, PsbF, PsbH, PsbI, PsbJ, PsbK, PsbL, PsbM, PsbT, PsbX, PsbY, PsbZ, Psb30/Ycf12, at least 3 peripheral proteins of the oxygen-evolving complex and a large number of cofactors. It forms dimeric complexes. The cofactor is The D1/D2 heterodimer binds P680, chlorophylls that are the primary electron donor of PSII, and subsequent electron acceptors. It shares a non-heme iron and each subunit binds pheophytin, quinone, additional chlorophylls, carotenoids and lipids. There is also a Cl(-1) ion associated with D1 and D2, which is required for oxygen evolution. The PSII complex binds additional chlorophylls, carotenoids and specific lipids..

The protein resides in the plastid. It localises to the chloroplast thylakoid membrane. The enzyme catalyses 2 a plastoquinone + 4 hnu + 2 H2O = 2 a plastoquinol + O2. Functionally, photosystem II (PSII) is a light-driven water:plastoquinone oxidoreductase that uses light energy to abstract electrons from H(2)O, generating O(2) and a proton gradient subsequently used for ATP formation. It consists of a core antenna complex that captures photons, and an electron transfer chain that converts photonic excitation into a charge separation. The D1/D2 (PsbA/PsbD) reaction center heterodimer binds P680, the primary electron donor of PSII as well as several subsequent electron acceptors. D2 is needed for assembly of a stable PSII complex. This chain is Photosystem II D2 protein, found in Mesostigma viride (Green alga).